We begin with the raw amino-acid sequence, 292 residues long: 4-hydroxy-tetrahydrodipicolinate synthase (292 aa).

Threonine 45 provides a ligand contact to pyruvate. Tyrosine 133 serves as the catalytic Proton donor/acceptor. The Schiff-base intermediate with substrate role is filled by lysine 161. Position 203 (isoleucine 203) interacts with pyruvate.

This sequence belongs to the DapA family. Homodimer.

The protein resides in the cytoplasm. The catalysed reaction is L-aspartate 4-semialdehyde + pyruvate = (2S,4S)-4-hydroxy-2,3,4,5-tetrahydrodipicolinate + H2O + H(+). The protein operates within amino-acid biosynthesis; L-lysine biosynthesis via DAP pathway; (S)-tetrahydrodipicolinate from L-aspartate: step 3/4. In terms of biological role, catalyzes the condensation of (S)-aspartate-beta-semialdehyde [(S)-ASA] and pyruvate to 4-hydroxy-tetrahydrodipicolinate (HTPA). The polypeptide is 4-hydroxy-tetrahydrodipicolinate synthase (Pseudomonas syringae pv. syringae (strain B728a)).